A 239-amino-acid chain; its full sequence is Metallo-beta-lactamase IND-1 (239 aa).

Residues 1–20 (MKKSIRFFIVSILLSPFASA) form the signal peptide. Zn(2+) is bound by residues histidine 96, histidine 98, aspartate 100, histidine 159, and cysteine 178. Lysine 181 provides a ligand contact to a beta-lactam. Histidine 220 serves as a coordination point for Zn(2+).

The protein belongs to the metallo-beta-lactamase superfamily. Class-B beta-lactamase family. In terms of assembly, monomer. Requires Zn(2+) as cofactor.

The protein localises to the periplasm. The enzyme catalyses a beta-lactam + H2O = a substituted beta-amino acid. Its activity is regulated as follows. Inhibited by chelating agents such as EDTA. Not susceptible to inactivation by the beta-lactamase-blocking agent clavulanic acid. Functionally, class B beta-lactamase which confers resistance to the beta-lactam antibiotics, including penicillins, cephalosporins and carbapenems. Acts via hydrolysis of the beta-lactam ring. Has penicillin-, cephalosporin- and carbapenem-hydrolyzing activities. This is Metallo-beta-lactamase IND-1 from Chryseobacterium indologenes (Flavobacterium indologenes).